The following is a 236-amino-acid chain: Purine nucleoside phosphorylase DeoD-type (236 aa).

Histidine 4 is a binding site for a purine D-ribonucleoside. Phosphate is bound by residues glycine 20, arginine 24, arginine 43, and 87-90 (RVGS). A purine D-ribonucleoside is bound by residues 179–181 (EME) and 203–204 (SD). Residue aspartate 204 is the Proton donor of the active site.

Belongs to the PNP/UDP phosphorylase family. In terms of assembly, homohexamer; trimer of homodimers.

It carries out the reaction a purine D-ribonucleoside + phosphate = a purine nucleobase + alpha-D-ribose 1-phosphate. The enzyme catalyses a purine 2'-deoxy-D-ribonucleoside + phosphate = a purine nucleobase + 2-deoxy-alpha-D-ribose 1-phosphate. In terms of biological role, catalyzes the reversible phosphorolytic breakdown of the N-glycosidic bond in the beta-(deoxy)ribonucleoside molecules, with the formation of the corresponding free purine bases and pentose-1-phosphate. The polypeptide is Purine nucleoside phosphorylase DeoD-type (Limosilactobacillus reuteri (strain DSM 20016) (Lactobacillus reuteri)).